Consider the following 230-residue polypeptide: 7-cyano-7-deazaguanine synthase (230 aa).

8–18 (LSGGMDSAVVT) lines the ATP pocket. The Zn(2+) site is built by Cys186, Cys196, Cys199, and Cys202.

This sequence belongs to the QueC family. Zn(2+) serves as cofactor.

The catalysed reaction is 7-carboxy-7-deazaguanine + NH4(+) + ATP = 7-cyano-7-deazaguanine + ADP + phosphate + H2O + H(+). It participates in purine metabolism; 7-cyano-7-deazaguanine biosynthesis. Catalyzes the ATP-dependent conversion of 7-carboxy-7-deazaguanine (CDG) to 7-cyano-7-deazaguanine (preQ(0)). The protein is 7-cyano-7-deazaguanine synthase of Xylella fastidiosa (strain M23).